We begin with the raw amino-acid sequence, 326 residues long: Thioredoxin reductase (326 aa).

55-62 (EGPEPGGQ) provides a ligand contact to FAD. C156 and C159 form a disulfide bridge. 298–307 (DVSNKLYAQA) serves as a coordination point for FAD.

This sequence belongs to the class-II pyridine nucleotide-disulfide oxidoreductase family. Homodimer. Requires FAD as cofactor.

The protein resides in the cytoplasm. It carries out the reaction [thioredoxin]-dithiol + NADP(+) = [thioredoxin]-disulfide + NADPH + H(+). In Borreliella burgdorferi (strain ATCC 35210 / DSM 4680 / CIP 102532 / B31) (Borrelia burgdorferi), this protein is Thioredoxin reductase (trxB).